The primary structure comprises 307 residues: MIKDKHLIDPMDFTVEELEEIFKLAHEIILDPEKFSHVCEGKILGTLFYEPSTRTRFSFEAAMMRLGGKILGFSEPNSSSASKGESLSDTIKMVSIYTDIIAMRHPKEGSAKVASLYSSVPIINAGDGGHQHPTQTLTDLLTIEMLKDGLSNHTIGICGDLKYGRTVHSLIKAMSRYKGNKFLLISPKELRIPDYIREEILRKNNIEFLEVETLEEVIDKVDILYMTRIQKERFFNEEEYLRLRDSYILNKEKMNLAKSDMIVMHPLPRVNEIACEVDYDKRAAYFKQAEYGMYARMALMAKLLGVL.

Carbamoyl phosphate is bound by residues Arg54 and Thr55. An L-aspartate-binding site is contributed by Lys83. The carbamoyl phosphate site is built by Arg104, His132, and Gln135. 2 residues coordinate L-aspartate: Arg165 and Arg228. 2 residues coordinate carbamoyl phosphate: Leu267 and Pro268.

The protein belongs to the aspartate/ornithine carbamoyltransferase superfamily. ATCase family. As to quaternary structure, heterododecamer (2C3:3R2) of six catalytic PyrB chains organized as two trimers (C3), and six regulatory PyrI chains organized as three dimers (R2).

It carries out the reaction carbamoyl phosphate + L-aspartate = N-carbamoyl-L-aspartate + phosphate + H(+). It functions in the pathway pyrimidine metabolism; UMP biosynthesis via de novo pathway; (S)-dihydroorotate from bicarbonate: step 2/3. Catalyzes the condensation of carbamoyl phosphate and aspartate to form carbamoyl aspartate and inorganic phosphate, the committed step in the de novo pyrimidine nucleotide biosynthesis pathway. The sequence is that of Aspartate carbamoyltransferase catalytic subunit from Clostridium botulinum (strain Eklund 17B / Type B).